Here is a 460-residue protein sequence, read N- to C-terminus: Glycine--tRNA ligase (460 aa).

Substrate-binding residues include Arg98 and Glu172. ATP is bound by residues 204–206, 214–219, 288–289, and 332–335; these read RNE, FRTREF, EL, and GADR. 219 to 223 lines the substrate pocket; sequence FEQME. 328–332 serves as a coordination point for substrate; the sequence is EPSLG.

This sequence belongs to the class-II aminoacyl-tRNA synthetase family. In terms of assembly, homodimer.

The protein localises to the cytoplasm. It carries out the reaction tRNA(Gly) + glycine + ATP = glycyl-tRNA(Gly) + AMP + diphosphate. Catalyzes the attachment of glycine to tRNA(Gly). This chain is Glycine--tRNA ligase, found in Geobacillus kaustophilus (strain HTA426).